The following is a 156-amino-acid chain: Small ribosomal subunit protein uS7 (156 aa).

Belongs to the universal ribosomal protein uS7 family. As to quaternary structure, part of the 30S ribosomal subunit. Contacts proteins S9 and S11.

Its function is as follows. One of the primary rRNA binding proteins, it binds directly to 16S rRNA where it nucleates assembly of the head domain of the 30S subunit. Is located at the subunit interface close to the decoding center, probably blocks exit of the E-site tRNA. The polypeptide is Small ribosomal subunit protein uS7 (Nitratidesulfovibrio vulgaris (strain DSM 19637 / Miyazaki F) (Desulfovibrio vulgaris)).